The primary structure comprises 625 residues: MFSSISRGFAKSETGDTFSFSFKSSWLLSLLVLWGPPLTTAKSAADYYVRSLPGAPDGPLLKMHAGHIEVDPQNNGNLFFWHYQNRHIANRQRTVIWLNGGPGCSSMDGALMEVGPYRLKDNLTLEYNEGSWDEFANLLFVDQPVGTGFSYVNTDSYLHELDEMSAHFIIFLDKFFELFPEYEGDDIYLAGESYAGQHIPYIAKAILDRNKNAVSPWNLRGLLIGNGWISPADQYPSYLTFAYEEGLIKEDSRTAKSLEVLQSVCQSKLETGGKDRIHIGDCETVLQELLSKTLDSDNKCYNMYDIRLRDTVPSCGMNWPQDLKDVKPYLRRADVVKALNINPEKKSGWEECSGAVSSSFLPQKSVPAVQLLPSLLESGISVLLFSGDKDLICNHVGTEQLINNMKWGGGVGFETSPGVWAPRHDWTFEGEPAGIYQHARNLTYVLLYNSSHMAPYDLPRQTRDMLDRFMKVDIASIGGSPADSRIDGEKLPQTSVGGHPNSTAAEEQEKERMKQAEWKAYAKSGEAVLVVVIIGVSVWGFFIWRSRQRHRRYQGLYHEDVSGASVLERFHNKRSGQDVEAGDFDESELDDLHSPDMAREHYTVGEDSDEDDVNRQHQRTTINPS.

The first 41 residues, 1–41 (MFSSISRGFAKSETGDTFSFSFKSSWLLSLLVLWGPPLTTA), serve as a signal peptide directing secretion. At 42–523 (KSAADYYVRS…KQAEWKAYAK (482 aa)) the chain is on the lumenal side. N-linked (GlcNAc...) asparagine glycosylation occurs at N122. Catalysis depends on residues S193 and D390. Residues N441 and N449 are each glycosylated (N-linked (GlcNAc...) asparagine). Residue H452 is part of the active site. Residues 480 to 511 (SPADSRIDGEKLPQTSVGGHPNSTAAEEQEKE) are disordered. The segment covering 492–505 (PQTSVGGHPNSTAA) has biased composition (polar residues). The N-linked (GlcNAc...) asparagine glycan is linked to N501. Residues 524-544 (SGEAVLVVVIIGVSVWGFFIW) traverse the membrane as a helical segment. Residues 545–625 (RSRQRHRRYQ…QHQRTTINPS (81 aa)) are Cytoplasmic-facing. The disordered stretch occupies residues 574–625 (RSGQDVEAGDFDESELDDLHSPDMAREHYTVGEDSDEDDVNRQHQRTTINPS). Residues 580–589 (EAGDFDESEL) are compositionally biased toward acidic residues. A compositionally biased stretch (basic and acidic residues) spans 590-604 (DDLHSPDMAREHYTV).

Belongs to the peptidase S10 family.

The protein resides in the golgi apparatus. It is found in the trans-Golgi network membrane. It carries out the reaction Preferential release of a C-terminal arginine or lysine residue.. In terms of biological role, protease with a carboxypeptidase B-like function involved in the C-terminal processing of the lysine and arginine residues from protein precursors. Promotes cell fusion and is involved in the programmed cell death. The protein is Pheromone-processing carboxypeptidase kex1 (kex1) of Aspergillus oryzae (strain ATCC 42149 / RIB 40) (Yellow koji mold).